We begin with the raw amino-acid sequence, 445 residues long: AVMGRNLALNIESRGYTVSVFNRSREKTEEVVAENPGKKLVPYYTVQEFVESLETPRRILLMVQAGAGTDAAINSLKPYLDKGDIIIDGGNTFFHDTIRRNRELSAEGFNFIGTGVSGGEEGALKGPSIMPGGQKEAYELVAPILTKIAAVAEDGEPCVTYIGADGAGHYVKMVHNGIEYGDMQLIAEAYSLLKGGLNLSNEELAQTFTEWNKGELSSYLIDITKDIFTKKDEEGKYLVDVILDEAANKGTGKWTSQSSLDLGEPLSLITESVFARYISSLKEQRVAASKVLSGPQSQPAGDKAEFIEKVRRALYLGKIVSYAQGFSQLRAASEEYNWDLNYGEIAKIFRAGCIIRAQFLQKITDAYAETPAIANLLLAPYFKQIADDYQQALRDVVAYAVQNGIPVPTFGAAVAYYDSYRAAVLPANLIQAQRDYFGAHTYKRT.

NADP(+) contacts are provided by residues 1-4 (AVMG), 22-24 (NRS), 63-65 (VQA), and Asn91. Residues Asn91 and 117–119 (SGG) contribute to the substrate site. Lys172 functions as the Proton acceptor in the catalytic mechanism. 175–176 (HN) provides a ligand contact to substrate. Residue Glu179 is the Proton donor of the active site. Residues Tyr180, Lys249, Arg276, Arg434, and His440 each coordinate substrate.

This sequence belongs to the 6-phosphogluconate dehydrogenase family. Homodimer.

It catalyses the reaction 6-phospho-D-gluconate + NADP(+) = D-ribulose 5-phosphate + CO2 + NADPH. Its pathway is carbohydrate degradation; pentose phosphate pathway; D-ribulose 5-phosphate from D-glucose 6-phosphate (oxidative stage): step 3/3. Its function is as follows. Catalyzes the oxidative decarboxylation of 6-phosphogluconate to ribulose 5-phosphate and CO(2), with concomitant reduction of NADP to NADPH. In Pseudescherichia vulneris (Escherichia vulneris), this protein is 6-phosphogluconate dehydrogenase, decarboxylating (gnd).